The chain runs to 185 residues: Transcription termination/antitermination protein NusG (185 aa).

The region spanning 133-161 (PGEEVRVTEGPFADFNGTVEEVDYEKGRL) is the KOW domain.

This sequence belongs to the NusG family.

Its function is as follows. Participates in transcription elongation, termination and antitermination. The chain is Transcription termination/antitermination protein NusG from Haemophilus influenzae (strain ATCC 51907 / DSM 11121 / KW20 / Rd).